Here is a 379-residue protein sequence, read N- to C-terminus: Chaperone protein DnaJ (379 aa).

The 67-residue stretch at 5–71 folds into the J domain; that stretch reads DYYEILGVSR…EKRAMYDRFG (67 aa). The segment at 149–231 adopts a CR-type zinc-finger fold; sequence GTTIPIEYDR…CGGSGRIRKR (83 aa). Zn(2+)-binding residues include Cys162, Cys165, Cys179, Cys182, Cys205, Cys208, Cys219, and Cys222. CXXCXGXG motif repeat units follow at residues 162-169, 179-186, 205-212, and 219-226; these read CSHCNGEG, CPKCHGTG, CNQCGGTG, and CHVCGGSG.

The protein belongs to the DnaJ family. In terms of assembly, homodimer. Zn(2+) is required as a cofactor.

The protein localises to the cytoplasm. Functionally, participates actively in the response to hyperosmotic and heat shock by preventing the aggregation of stress-denatured proteins and by disaggregating proteins, also in an autonomous, DnaK-independent fashion. Unfolded proteins bind initially to DnaJ; upon interaction with the DnaJ-bound protein, DnaK hydrolyzes its bound ATP, resulting in the formation of a stable complex. GrpE releases ADP from DnaK; ATP binding to DnaK triggers the release of the substrate protein, thus completing the reaction cycle. Several rounds of ATP-dependent interactions between DnaJ, DnaK and GrpE are required for fully efficient folding. Also involved, together with DnaK and GrpE, in the DNA replication of plasmids through activation of initiation proteins. This is Chaperone protein DnaJ from Thermosipho africanus (strain TCF52B).